The sequence spans 69 residues: MDRKFHLCLLLVILGTIIVQGAPLENENDADPDKPQKYRYYLKRATTEKKDNDPAKPGCHYTPFGLICF.

Residues Met1–Gly21 form the signal peptide. The propeptide occupies Ala22–Pro57. An intrachain disulfide couples Cys59 to Cys68.

Tentacle (ecto and/or endoderm tissue), and possibly also nematoblasts.

It is found in the secreted. It localises to the nematocyst. Functionally, peptide with unknown function. Has a limited effect on human peripheral blood mononuclear cells. Does not show activity against both Gram-positive and Gram-negative bacteria nor is it active on the 26 voltage-gated ion channels tested. This chain is Peptide Hact-1, found in Heliofungia actiniformis (Mushroom coral).